The chain runs to 535 residues: CTP synthase (535 aa).

Residues 1–267 (MTKYIFVTGG…DKLVCEHMKL (267 aa)) form an amidoligase domain region. Ser-13 contributes to the CTP binding site. Residue Ser-13 participates in UTP binding. 14 to 19 (SLGKGI) provides a ligand contact to ATP. Tyr-54 contributes to the L-glutamine binding site. Asp-71 provides a ligand contact to ATP. Residues Asp-71 and Glu-141 each coordinate Mg(2+). CTP contacts are provided by residues 148–150 (DIE), 188–193 (KTKPTQ), and Lys-224. UTP contacts are provided by residues 188–193 (KTKPTQ) and Lys-224. Residues 292 to 534 (TIGLVGKYVE…IGASVEAANQ (243 aa)) form the Glutamine amidotransferase type-1 domain. Position 354 (Gly-354) interacts with L-glutamine. The Nucleophile; for glutamine hydrolysis role is filled by Cys-381. L-glutamine-binding positions include 382 to 385 (LGMQ), Glu-405, and Arg-462. Active-site residues include His-507 and Glu-509.

The protein belongs to the CTP synthase family. As to quaternary structure, homotetramer. Interacts with BrxC.

It catalyses the reaction UTP + L-glutamine + ATP + H2O = CTP + L-glutamate + ADP + phosphate + 2 H(+). It carries out the reaction L-glutamine + H2O = L-glutamate + NH4(+). The catalysed reaction is UTP + NH4(+) + ATP = CTP + ADP + phosphate + 2 H(+). It functions in the pathway pyrimidine metabolism; CTP biosynthesis via de novo pathway; CTP from UDP: step 2/2. Its activity is regulated as follows. Allosterically activated by GTP, when glutamine is the substrate; GTP has no effect on the reaction when ammonia is the substrate. The allosteric effector GTP functions by stabilizing the protein conformation that binds the tetrahedral intermediate(s) formed during glutamine hydrolysis. Inhibited by the product CTP, via allosteric rather than competitive inhibition. In terms of biological role, catalyzes the ATP-dependent amination of UTP to CTP with either L-glutamine or ammonia as the source of nitrogen. Regulates intracellular CTP levels through interactions with the four ribonucleotide triphosphates. The sequence is that of CTP synthase from Bacillus subtilis (strain 168).